A 771-amino-acid polypeptide reads, in one-letter code: DNA polymerase 1 (771 aa).

Belongs to the DNA polymerase type-B family.

It carries out the reaction DNA(n) + a 2'-deoxyribonucleoside 5'-triphosphate = DNA(n+1) + diphosphate. The protein is DNA polymerase 1 (polI) of Pyrococcus abyssi.